A 692-amino-acid chain; its full sequence is Polyribonucleotide nucleotidyltransferase (692 aa).

Residues aspartate 484 and aspartate 490 each coordinate Mg(2+). The KH domain maps to 551 to 614 (PKYFIHKISQ…ALVERVKSIT (64 aa)). One can recognise an S1 motif domain in the interval 620–688 (GAVYTGKVKT…NRGRIRLSRK (69 aa)).

Belongs to the polyribonucleotide nucleotidyltransferase family. Mg(2+) serves as cofactor.

It is found in the cytoplasm. It carries out the reaction RNA(n+1) + phosphate = RNA(n) + a ribonucleoside 5'-diphosphate. In terms of biological role, involved in mRNA degradation. Catalyzes the phosphorolysis of single-stranded polyribonucleotides processively in the 3'- to 5'-direction. In Desulfotalea psychrophila (strain LSv54 / DSM 12343), this protein is Polyribonucleotide nucleotidyltransferase.